Here is a 113-residue protein sequence, read N- to C-terminus: uncharacterized protein (113 aa).

Residues 1 to 16 (MKCLVVLTALFGISTA) form the signal peptide. Residues 81-101 (GGNGGNGGGGNGGNNGNGNGN) are compositionally biased toward gly residues. The interval 81 to 103 (GGNGGNGGGGNGGNNGNGNGNNG) is disordered.

As to expression, nacreous layer of shell (at protein level).

The protein resides in the secreted. This is an uncharacterized protein from Margaritifera margaritifera (Freshwater pearl mussel).